We begin with the raw amino-acid sequence, 199 residues long: Pyridoxine/pyridoxamine 5'-phosphate oxidase (199 aa).

FMN-binding positions include 44–49, 59–60, Lys-66, and Gln-91; these read RTVLLK and YT. Substrate is bound at residue Lys-49. Positions 109, 113, and 117 each coordinate substrate. FMN is bound by residues 126-127 and Trp-171; that span reads QS. 177 to 179 contacts substrate; that stretch reads RLH. Arg-181 contributes to the FMN binding site.

This sequence belongs to the pyridoxamine 5'-phosphate oxidase family. In terms of assembly, homodimer. The cofactor is FMN.

It carries out the reaction pyridoxamine 5'-phosphate + O2 + H2O = pyridoxal 5'-phosphate + H2O2 + NH4(+). The catalysed reaction is pyridoxine 5'-phosphate + O2 = pyridoxal 5'-phosphate + H2O2. It participates in cofactor metabolism; pyridoxal 5'-phosphate salvage; pyridoxal 5'-phosphate from pyridoxamine 5'-phosphate: step 1/1. Its pathway is cofactor metabolism; pyridoxal 5'-phosphate salvage; pyridoxal 5'-phosphate from pyridoxine 5'-phosphate: step 1/1. Its function is as follows. Catalyzes the oxidation of either pyridoxine 5'-phosphate (PNP) or pyridoxamine 5'-phosphate (PMP) into pyridoxal 5'-phosphate (PLP). The polypeptide is Pyridoxine/pyridoxamine 5'-phosphate oxidase (Xanthomonas euvesicatoria pv. vesicatoria (strain 85-10) (Xanthomonas campestris pv. vesicatoria)).